The chain runs to 831 residues: Vi polysaccharide biosynthesis protein TviD (831 aa).

It functions in the pathway glycan metabolism; Vi-antigen biosynthesis. Its pathway is capsule biogenesis; capsule polysaccharide biosynthesis. In terms of biological role, may be required for maturation of the Vi polysaccharide. In Salmonella typhi, this protein is Vi polysaccharide biosynthesis protein TviD (tviD).